The primary structure comprises 134 residues: Ribosome-binding factor A (134 aa).

Belongs to the RbfA family. As to quaternary structure, monomer. Binds 30S ribosomal subunits, but not 50S ribosomal subunits or 70S ribosomes.

The protein resides in the cytoplasm. Functionally, one of several proteins that assist in the late maturation steps of the functional core of the 30S ribosomal subunit. Associates with free 30S ribosomal subunits (but not with 30S subunits that are part of 70S ribosomes or polysomes). Required for efficient processing of 16S rRNA. May interact with the 5'-terminal helix region of 16S rRNA. This Synechococcus sp. (strain CC9311) protein is Ribosome-binding factor A.